Here is a 314-residue protein sequence, read N- to C-terminus: Oxaloacetate tautomerase FAHD2B, mitochondrial (314 aa).

Residues 1 to 84 (MLGSSGRRLL…ATLSVVRRAL (84 aa)) constitute a mitochondrion transit peptide. Glu159, Glu161, and Asp190 together coordinate Mg(2+). The residue at position 203 (Lys203) is an N6-acetyllysine; alternate. Residue Lys203 is modified to N6-succinyllysine; alternate. The residue at position 234 (Lys234) is an N6-acetyllysine.

This sequence belongs to the FAH family. Requires Mg(2+) as cofactor. It depends on Mn(2+) as a cofactor.

It is found in the mitochondrion. It catalyses the reaction oxaloacetate = enol-oxaloacetate. Its function is as follows. Tautomerase that converts enol-oxaloacetate, a strong inhibitor of succinate dehydrogenase, to the physiological keto form of oxaloacetate. It is thereby required to maximize aerobic respiration efficiency by preventing succinate dehydrogenase inhibition. This Bos taurus (Bovine) protein is Oxaloacetate tautomerase FAHD2B, mitochondrial.